The following is a 637-amino-acid chain: Formate--tetrahydrofolate ligase (637 aa).

Position 81–88 (81–88 (TPLGEGKS)) interacts with ATP.

Belongs to the formate--tetrahydrofolate ligase family. As to quaternary structure, homodimer.

It carries out the reaction (6S)-5,6,7,8-tetrahydrofolate + formate + ATP = (6R)-10-formyltetrahydrofolate + ADP + phosphate. Its pathway is one-carbon metabolism; tetrahydrofolate interconversion. The protein is Formate--tetrahydrofolate ligase of Spinacia oleracea (Spinach).